We begin with the raw amino-acid sequence, 161 residues long: Allophycocyanin alpha-B chain (161 aa).

Asparagine 71 bears the N4-methylasparagine mark. Residue cysteine 81 participates in (2R,3E)-phycocyanobilin binding.

It belongs to the phycobiliprotein family. In terms of processing, contains one covalently linked bilin chromophore.

It is found in the plastid. Its subcellular location is the chloroplast thylakoid membrane. Functionally, allophycocyanin is a photosynthetic bile pigment-protein complex with maximum absorption at approximately 650 nanometers. This Porphyra purpurea (Red seaweed) protein is Allophycocyanin alpha-B chain (apcD).